Here is a 720-residue protein sequence, read N- to C-terminus: GTPase-activating protein gyp2 (720 aa).

One can recognise a GRAM domain in the interval 20-85 (LDPASFFRIN…AAVRKLEREN (66 aa)). A Rab-GAP TBC domain is found at 216-404 (GIPNNLRADI…RILDCLFVNG (189 aa)).

The protein localises to the cytoplasm. It is found in the nucleus. Stimulates specifically the GTPase activity of ypt2 and ryh1. Inactivates ryh1 during recycling between the endosome and the Golgi compartments. The protein is GTPase-activating protein gyp2 of Schizosaccharomyces pombe (strain 972 / ATCC 24843) (Fission yeast).